A 299-amino-acid polypeptide reads, in one-letter code: Very long chain fatty acid elongase 5 (299 aa).

Met-1 carries the N-acetylmethionine modification. 7 helical membrane passes run 26–46 (WFLL…LLIV), 64–84 (ILVV…CELV), 112–132 (VLWW…FFIL), 139–158 (ITVL…WFVM), 168–187 (FGAT…YGLS), 205–225 (GQLL…IWPC), and 226–246 (TFPL…ITLF). At Ser-285 the chain carries Phosphoserine.

It belongs to the ELO family. ELOVL5 subfamily. Interacts with TECR.

It localises to the endoplasmic reticulum membrane. The protein resides in the cell projection. It is found in the dendrite. It catalyses the reaction a very-long-chain acyl-CoA + malonyl-CoA + H(+) = a very-long-chain 3-oxoacyl-CoA + CO2 + CoA. The enzyme catalyses (6Z,9Z,12Z)-octadecatrienoyl-CoA + malonyl-CoA + H(+) = (8Z,11Z,14Z)-3-oxoeicosatrienoyl-CoA + CO2 + CoA. It carries out the reaction (9Z,12Z,15Z)-octadecatrienoyl-CoA + malonyl-CoA + H(+) = (11Z,14Z,17Z)-3-oxoeicosatrienoyl-CoA + CO2 + CoA. The catalysed reaction is (9Z)-hexadecenoyl-CoA + malonyl-CoA + H(+) = 3-oxo-(11Z)-octadecenoyl-CoA + CO2 + CoA. It catalyses the reaction (9Z)-octadecenoyl-CoA + malonyl-CoA + H(+) = 3-oxo-(11Z)-eicosenoyl-CoA + CO2 + CoA. The enzyme catalyses (11Z)-octadecenoyl-CoA + malonyl-CoA + H(+) = 3-oxo-(13Z)-eicosenoyl-CoA + CO2 + CoA. It carries out the reaction (9Z,12Z)-octadecadienoyl-CoA + malonyl-CoA + H(+) = (11Z,14Z)-3-oxoicosa-11,14-dienoyl-CoA + CO2 + CoA. The catalysed reaction is (6Z,9Z,12Z,15Z)-octadecatetraenoyl-CoA + malonyl-CoA + H(+) = (8Z,11Z,14Z,17Z)-3-oxoicosatetraenoyl-CoA + CO2 + CoA. It catalyses the reaction (5Z,8Z,11Z,14Z)-eicosatetraenoyl-CoA + malonyl-CoA + H(+) = (7Z,10Z,13Z,16Z)-3-oxodocosatetraenoyl-CoA + CO2 + CoA. The enzyme catalyses (5Z,8Z,11Z,14Z,17Z)-eicosapentaenoyl-CoA + malonyl-CoA + H(+) = 3-oxo-(7Z,10Z,13Z,16Z,19Z)-docosapentaenoyl-CoA + CO2 + CoA. The protein operates within lipid metabolism; polyunsaturated fatty acid biosynthesis. Functionally, catalyzes the first and rate-limiting reaction of the four reactions that constitute the long-chain fatty acids elongation cycle. This endoplasmic reticulum-bound enzymatic process allows the addition of 2 carbons to the chain of long- and very long-chain fatty acids (VLCFAs) per cycle. Condensing enzyme that acts specifically toward polyunsaturated acyl-CoA with the higher activity toward C18:3(n-6) acyl-CoA. May participate in the production of monounsaturated and of polyunsaturated VLCFAs of different chain lengths that are involved in multiple biological processes as precursors of membrane lipids and lipid mediators. In conditions where the essential linoleic and alpha linoleic fatty acids are lacking it is also involved in the synthesis of Mead acid from oleic acid. This Bos taurus (Bovine) protein is Very long chain fatty acid elongase 5.